The following is a 494-amino-acid chain: Pre-hexon-linking protein IIIa (494 aa).

The segment at M1–N101 is peripentonal hexon-tethering domain. The interval G132 to D245 is binding to hexon-linking protein. Position 268 is a phosphothreonine; by host (T268). Phosphoserine; by host is present on residues S439 and S456. Residues T484–F494 constitute a propeptide that is removed on maturation.

It belongs to the adenoviridae hexon-linking protein IIIa family. As to quaternary structure, interacts with hexon proteins; this interaction tethers the peripentonal hexons to hexons situated in the facet. Interacts with the penton protein (via N-terminus). Interacts with packaging protein 3; this interaction is required to promote correct genome packaging. Cleaved near the C-terminus by the viral protease during virion maturation to form the mature protein.

Its subcellular location is the virion. The protein localises to the host nucleus. Functionally, structural component of the virion that acts as a cement protein on the capsid exterior which mediates the interactions between the hexons, including the peripentonal hexons, and reaches all the way to the penton vertices. Two hexon linking proteins IIIa, one from each facet, stabilize the unique edge interface between a pair of facets. As the virus enters the host cell, hexon linking proteins IIIa are shed concomitant with virion acidification in the endosome. During virus assembly, seems to play a role in the serotype specificity of the packaging of viral DNA via its interaction with packaging protein 3. This Murine adenovirus A serotype 1 (MAdV-1) protein is Pre-hexon-linking protein IIIa.